Here is a 100-residue protein sequence, read N- to C-terminus: Enhancer of yellow 2 transcription factor (100 aa).

This sequence belongs to the ENY2 family. As to quaternary structure, component of the nuclear pore complex (NPC)-associated AMEX complex (anchoring and mRNA export complex), composed of at least e(y)2 and xmas-2. Component of the SAGA transcription coactivator-HAT complexes, at least composed of Ada2b, e(y)2, Pcaf/Gcn5, Taf10 and Nipped-A/Trrap. Within the SAGA complex, e(y)2, Sgf11, and not/nonstop form an additional subcomplex of SAGA called the DUB module (deubiquitination module). Component of the THO complex, composed of at least e(y)2, HPR1, THO2, THOC5, THOC6 and THOC7. Interacts with e(y)1. Interacts with su(Hw) (via zinc fingers). Interacts with xmas-2; required for localization to the nuclear periphery. Interacts with the nuclear pore complex (NPC).

It is found in the nucleus. It localises to the nucleoplasm. The protein localises to the cytoplasm. Its function is as follows. Involved in mRNA export coupled transcription activation by association with both the AMEX and the SAGA complexes. The SAGA complex is a multiprotein complex that activates transcription by remodeling chromatin and mediating histone acetylation and deubiquitination. Within the SAGA complex, participates in a subcomplex that specifically deubiquitinates histone H2B. The SAGA complex is recruited to specific gene promoters by activators, where it is required for transcription. Required for nuclear receptor-mediated transactivation. Involved in transcription elongation by recruiting the THO complex onto nascent mRNA. The AMEX complex functions in docking export-competent ribonucleoprotein particles (mRNPs) to the nuclear entrance of the nuclear pore complex (nuclear basket). AMEX participates in mRNA export and accurate chromatin positioning in the nucleus by tethering genes to the nuclear periphery. The sequence is that of Enhancer of yellow 2 transcription factor from Drosophila persimilis (Fruit fly).